A 151-amino-acid polypeptide reads, in one-letter code: UPF0178 protein Swoo_1444 (151 aa).

The protein belongs to the UPF0178 family.

The chain is UPF0178 protein Swoo_1444 from Shewanella woodyi (strain ATCC 51908 / MS32).